A 359-amino-acid polypeptide reads, in one-letter code: Peptide chain release factor 1 (359 aa).

Gln236 bears the N5-methylglutamine mark. Residues 288-308 (QDEQDAERKSTIGTGDRSERI) are disordered. Over residues 293-308 (AERKSTIGTGDRSERI) the composition is skewed to basic and acidic residues.

This sequence belongs to the prokaryotic/mitochondrial release factor family. Methylated by PrmC. Methylation increases the termination efficiency of RF1.

Its subcellular location is the cytoplasm. Functionally, peptide chain release factor 1 directs the termination of translation in response to the peptide chain termination codons UAG and UAA. The polypeptide is Peptide chain release factor 1 (Streptococcus uberis (strain ATCC BAA-854 / 0140J)).